The sequence spans 225 residues: Thymidine kinase (225 aa).

Position 15–22 (15–22 (GSMFSGKT)) interacts with ATP. A disordered region spans residues 85 to 110 (KKQNHRTTTQCRSGDGTNNPGGVIPS). A compositionally biased stretch (polar residues) spans 90 to 104 (RTTTQCRSGDGTNNP). 121–124 (DEAN) provides a ligand contact to ATP. Glu-122 (proton acceptor) is an active-site residue. 4 residues coordinate Zn(2+): Cys-178, Cys-181, Cys-216, and Cys-219.

This sequence belongs to the thymidine kinase family. In terms of assembly, homotetramer.

It is found in the cytoplasm. The catalysed reaction is thymidine + ATP = dTMP + ADP + H(+). This Haloquadratum walsbyi (strain DSM 16790 / HBSQ001) protein is Thymidine kinase.